Here is an 853-residue protein sequence, read N- to C-terminus: Leucine-rich repeat and death domain-containing protein 1 (853 aa).

The disordered stretch occupies residues M1–S78. Residues L19–D31 are compositionally biased toward acidic residues. The span at Q56–L65 shows a compositional bias: polar residues. 26 LRR repeats span residues M133–V157, Y159–D180, G183–F204, N206–L227, N229–R251, Y252–K274, N275–P297, K298–L319, N321–L342, K344–F365, E367–C388, N390–L411, N413–S435, N436–C457, K459–Q481, S482–S503, Q505–T527, N528–M549, S551–K573, N574–K596, R597–L618, T620–V641, Q646–R668, S669–L690, V692–L713, and S715–G736. The region spanning L757–N845 is the Death domain.

In Mus musculus (Mouse), this protein is Leucine-rich repeat and death domain-containing protein 1 (Lrrd1).